The sequence spans 309 residues: Eugenol synthase 2 (309 aa).

NADP(+) is bound by residues 13-16 (TGYI), 35-45 (VRETTVSDPVK), Arg36, 86-88 (FMQ), 111-113 (SEF), Lys134, and 154-156 (NCF). Lys134 serves as the catalytic Proton donor/acceptor.

Belongs to the NmrA-type oxidoreductase family. Mostly expressed in petals, and, to a lower extent, in sepals, stamens and pistils.

It carries out the reaction eugenol + a carboxylate + NADP(+) = a coniferyl ester + NADPH. The catalysed reaction is eugenol + acetate + NADP(+) = (E)-coniferyl acetate + NADPH. It functions in the pathway aromatic compound metabolism; phenylpropanoid biosynthesis. Functionally, catalyzes the synthesis of the phenylpropene eugenol from coniferyl acetate. Phenylpropenes are produced by plants as defense compounds with antimicrobial and antianimal properties, or as floral attractants of pollinators. The protein is Eugenol synthase 2 of Clarkia breweri (Fairy fans).